The sequence spans 328 residues: Phosphate acyltransferase (328 aa).

It belongs to the PlsX family. As to quaternary structure, homodimer. Probably interacts with PlsY.

The protein resides in the cytoplasm. It catalyses the reaction a fatty acyl-[ACP] + phosphate = an acyl phosphate + holo-[ACP]. Its pathway is lipid metabolism; phospholipid metabolism. In terms of biological role, catalyzes the reversible formation of acyl-phosphate (acyl-PO(4)) from acyl-[acyl-carrier-protein] (acyl-ACP). This enzyme utilizes acyl-ACP as fatty acyl donor, but not acyl-CoA. The chain is Phosphate acyltransferase from Staphylococcus saprophyticus subsp. saprophyticus (strain ATCC 15305 / DSM 20229 / NCIMB 8711 / NCTC 7292 / S-41).